Reading from the N-terminus, the 246-residue chain is Sugar fermentation stimulation protein homolog (246 aa).

The protein belongs to the SfsA family.

The polypeptide is Sugar fermentation stimulation protein homolog (Prochlorococcus marinus (strain MIT 9312)).